Reading from the N-terminus, the 311-residue chain is Putative dihydroorotate dehydrogenase A (fumarate) (311 aa).

Substrate is bound by residues Lys-45, 69 to 73 (NSMGL), and Asn-128. 45-46 (KT) lines the FMN pocket. Asn-128 serves as a coordination point for FMN. Cys-131 acts as the Nucleophile in catalysis. Residues Lys-165 and Val-193 each coordinate FMN. Residue 194–195 (NS) participates in substrate binding. FMN is bound by residues Gly-220, 248 to 249 (GG), and 270 to 271 (GT).

It belongs to the dihydroorotate dehydrogenase family. Type 1 subfamily. In terms of assembly, homodimer. The cofactor is FMN.

It localises to the cytoplasm. The catalysed reaction is (S)-dihydroorotate + fumarate = orotate + succinate. It functions in the pathway pyrimidine metabolism; UMP biosynthesis via de novo pathway. Catalyzes the conversion of dihydroorotate to orotate with fumarate as the electron acceptor. This chain is Putative dihydroorotate dehydrogenase A (fumarate) (pyrD), found in Streptococcus pyogenes serotype M18 (strain MGAS8232).